A 121-amino-acid polypeptide reads, in one-letter code: Small ribosomal subunit protein uS13 (121 aa).

Residues histidine 91 to lysine 121 are disordered.

This sequence belongs to the universal ribosomal protein uS13 family. In terms of assembly, part of the 30S ribosomal subunit. Forms a loose heterodimer with protein S19. Forms two bridges to the 50S subunit in the 70S ribosome.

Located at the top of the head of the 30S subunit, it contacts several helices of the 16S rRNA. In the 70S ribosome it contacts the 23S rRNA (bridge B1a) and protein L5 of the 50S subunit (bridge B1b), connecting the 2 subunits; these bridges are implicated in subunit movement. Contacts the tRNAs in the A and P-sites. The protein is Small ribosomal subunit protein uS13 of Bordetella petrii (strain ATCC BAA-461 / DSM 12804 / CCUG 43448).